The chain runs to 365 residues: Probable dual-specificity RNA methyltransferase RlmN (365 aa).

Residue E99 is the Proton acceptor of the active site. The Radical SAM core domain maps to 105-344 (QSYGLSVCVT…CVVRQEHGTD (240 aa)). C112 and C349 are disulfide-bonded. Positions 119, 123, and 126 each coordinate [4Fe-4S] cluster. Residues 171–172 (GE), S203, 227–229 (SLH), and N305 each bind S-adenosyl-L-methionine. C349 (S-methylcysteine intermediate) is an active-site residue.

Belongs to the radical SAM superfamily. RlmN family. [4Fe-4S] cluster is required as a cofactor.

It localises to the cytoplasm. It catalyses the reaction adenosine(2503) in 23S rRNA + 2 reduced [2Fe-2S]-[ferredoxin] + 2 S-adenosyl-L-methionine = 2-methyladenosine(2503) in 23S rRNA + 5'-deoxyadenosine + L-methionine + 2 oxidized [2Fe-2S]-[ferredoxin] + S-adenosyl-L-homocysteine. It carries out the reaction adenosine(37) in tRNA + 2 reduced [2Fe-2S]-[ferredoxin] + 2 S-adenosyl-L-methionine = 2-methyladenosine(37) in tRNA + 5'-deoxyadenosine + L-methionine + 2 oxidized [2Fe-2S]-[ferredoxin] + S-adenosyl-L-homocysteine. In terms of biological role, specifically methylates position 2 of adenine 2503 in 23S rRNA and position 2 of adenine 37 in tRNAs. This chain is Probable dual-specificity RNA methyltransferase RlmN, found in Lactococcus lactis subsp. cremoris (strain SK11).